A 413-amino-acid chain; its full sequence is Gamma-glutamyl phosphate reductase (413 aa).

The protein belongs to the gamma-glutamyl phosphate reductase family.

It is found in the cytoplasm. It catalyses the reaction L-glutamate 5-semialdehyde + phosphate + NADP(+) = L-glutamyl 5-phosphate + NADPH + H(+). The protein operates within amino-acid biosynthesis; L-proline biosynthesis; L-glutamate 5-semialdehyde from L-glutamate: step 2/2. Catalyzes the NADPH-dependent reduction of L-glutamate 5-phosphate into L-glutamate 5-semialdehyde and phosphate. The product spontaneously undergoes cyclization to form 1-pyrroline-5-carboxylate. This chain is Gamma-glutamyl phosphate reductase, found in Salinispora tropica (strain ATCC BAA-916 / DSM 44818 / JCM 13857 / NBRC 105044 / CNB-440).